We begin with the raw amino-acid sequence, 198 residues long: Probable GTP-binding protein EngB (198 aa).

One can recognise an EngB-type G domain in the interval 22-195 (DLPEIALAGR…WKAIHKMTKT (174 aa)). GTP is bound by residues 30–37 (GRSNVGKS), 57–61 (GKTQT), 75–78 (DVPG), 142–145 (TKAD), and 174–176 (FSS). Residues Ser37 and Thr59 each coordinate Mg(2+).

This sequence belongs to the TRAFAC class TrmE-Era-EngA-EngB-Septin-like GTPase superfamily. EngB GTPase family. It depends on Mg(2+) as a cofactor.

Its function is as follows. Necessary for normal cell division and for the maintenance of normal septation. This Bacillus cereus (strain G9842) protein is Probable GTP-binding protein EngB.